The primary structure comprises 111 residues: Large ribosomal subunit protein P2B (111 aa).

The disordered stretch occupies residues 62 to 111; it reads LASVPSGGAAAGGASASTGAAAGGAAEAEEEKEEEAKEESDDDMGFGLFD. The segment covering 67-87 has biased composition (low complexity); it reads SGGAAAGGASASTGAAAGGAA. Residues 88–105 are compositionally biased toward acidic residues; it reads EAEEEKEEEAKEESDDDM. S101 is modified (phosphoserine).

The protein belongs to the eukaryotic ribosomal protein P1/P2 family.

In terms of biological role, plays an important role in the elongation step of protein synthesis. The sequence is that of Large ribosomal subunit protein P2B (RPP2B) from Candida albicans (Yeast).